We begin with the raw amino-acid sequence, 116 residues long: Nucleoid-associated protein SACE_0254 (116 aa).

Positions 90 to 116 are disordered; that stretch reads LQQEKMGPVTGALGGGQGLGGLGLPGL. Residues 101–116 show a composition bias toward gly residues; it reads ALGGGQGLGGLGLPGL.

This sequence belongs to the YbaB/EbfC family. As to quaternary structure, homodimer.

The protein resides in the cytoplasm. Its subcellular location is the nucleoid. Functionally, binds to DNA and alters its conformation. May be involved in regulation of gene expression, nucleoid organization and DNA protection. The chain is Nucleoid-associated protein SACE_0254 from Saccharopolyspora erythraea (strain ATCC 11635 / DSM 40517 / JCM 4748 / NBRC 13426 / NCIMB 8594 / NRRL 2338).